A 300-amino-acid polypeptide reads, in one-letter code: Hairy/enhancer-of-split related with YRPW motif protein 1 (300 aa).

Positions 1–52 are disordered; it reads MKRGHDYSSSDSELDENIEVEKESADENGNLSSAAGSMSPSTSSQILARKRR. A compositionally biased stretch (low complexity) spans 32 to 44; sequence SSAAGSMSPSTSS. In terms of domain architecture, bHLH spans 48–103; it reads ARKRRRGIIEKRRRDRINNSLSELRRLVPSAFEKQGSAKLEKAEILQMTVDHLKML. In terms of domain architecture, Orange spans 121–157; the sequence is YRSLGFRECLAEVARYLSIIEGMDTTDPLRVRLVSHL. A compositionally biased stretch (low complexity) spans 199 to 210; it reads AHTSANSTSSST. Disordered stretches follow at residues 199–232 and 278–300; these read AHTS…LRVP and LSPT…IGAF. A YRPW motif motif is present at residues 290-293; sequence YRPW.

It belongs to the HEY family. In terms of assembly, efficient DNA binding requires dimerization with another bHLH protein. Binds DNA in the form of homodimer or more strongly as a heterodimer with hes1/hairy1 or hes4/hairy2b. Also weakly interacts with the bHLH proteins hes2, neurod1 and neurod4/ath3. Interacts (via Orange domain) with ccdc89/boip (via C-terminus).

The protein localises to the nucleus. Downstream effector of Notch signaling. Transcriptional repressor which binds preferentially to the canonical E box sequence 5'-CACGTG-3'. Acts as a suppressor of neurogenesis by antagonizing proneural gene function. Functions during floorplate development. Plays a role in pronephros formation in the inhibition of distal tubule and duct cell fates and the promotion of glomus and proximal tubule formation. This is Hairy/enhancer-of-split related with YRPW motif protein 1 (hey1) from Xenopus tropicalis (Western clawed frog).